A 76-amino-acid polypeptide reads, in one-letter code: Cytochrome c oxidase subunit 6C-2 (76 aa).

Over 4–14 the chain is Mitochondrial matrix; sequence GALLPKPQMRG. The helical transmembrane segment at 15 to 55 threads the bilayer; sequence LLAKRLRVHIVGAFVVALGVAAAYKFGVAEPRKKAYADFYR. Residues 56-76 lie on the Mitochondrial intermembrane side of the membrane; sequence NYDSMKDFEEMRQAGVFQSAK. Ser74 carries the post-translational modification Phosphoserine.

This sequence belongs to the cytochrome c oxidase subunit 6c family. Component of the cytochrome c oxidase (complex IV, CIV), a multisubunit enzyme composed of 14 subunits. The complex is composed of a catalytic core of 3 subunits MT-CO1, MT-CO2 and MT-CO3, encoded in the mitochondrial DNA, and 11 supernumerary subunits COX4I, COX5A, COX5B, COX6A, COX6B, COX6C, COX7A, COX7B, COX7C, COX8 and NDUFA4, which are encoded in the nuclear genome. The complex exists as a monomer or a dimer and forms supercomplexes (SCs) in the inner mitochondrial membrane with NADH-ubiquinone oxidoreductase (complex I, CI) and ubiquinol-cytochrome c oxidoreductase (cytochrome b-c1 complex, complex III, CIII), resulting in different assemblies (supercomplex SCI(1)III(2)IV(1) and megacomplex MCI(2)III(2)IV(2)).

The protein resides in the mitochondrion inner membrane. It participates in energy metabolism; oxidative phosphorylation. Functionally, component of the cytochrome c oxidase, the last enzyme in the mitochondrial electron transport chain which drives oxidative phosphorylation. The respiratory chain contains 3 multisubunit complexes succinate dehydrogenase (complex II, CII), ubiquinol-cytochrome c oxidoreductase (cytochrome b-c1 complex, complex III, CIII) and cytochrome c oxidase (complex IV, CIV), that cooperate to transfer electrons derived from NADH and succinate to molecular oxygen, creating an electrochemical gradient over the inner membrane that drives transmembrane transport and the ATP synthase. Cytochrome c oxidase is the component of the respiratory chain that catalyzes the reduction of oxygen to water. Electrons originating from reduced cytochrome c in the intermembrane space (IMS) are transferred via the dinuclear copper A center (CU(A)) of subunit 2 and heme A of subunit 1 to the active site in subunit 1, a binuclear center (BNC) formed by heme A3 and copper B (CU(B)). The BNC reduces molecular oxygen to 2 water molecules using 4 electrons from cytochrome c in the IMS and 4 protons from the mitochondrial matrix. This Rattus norvegicus (Rat) protein is Cytochrome c oxidase subunit 6C-2 (Cox6c2).